The sequence spans 744 residues: Phosphoribosylformylglycinamidine synthase subunit PurL (744 aa).

Histidine 45 is a catalytic residue. ATP contacts are provided by tyrosine 48 and lysine 87. Glutamate 89 provides a ligand contact to Mg(2+). Residues 90–93 (SHNH) and arginine 112 contribute to the substrate site. Catalysis depends on histidine 91, which acts as the Proton acceptor. Aspartate 113 lines the Mg(2+) pocket. Residue glutamine 236 participates in substrate binding. Residue aspartate 264 coordinates Mg(2+). Residue 308 to 310 (ESQ) participates in substrate binding. ATP-binding residues include asparagine 492 and glycine 529. Asparagine 530 lines the Mg(2+) pocket. Position 532 (serine 532) interacts with substrate.

This sequence belongs to the FGAMS family. As to quaternary structure, monomer. Part of the FGAM synthase complex composed of 1 PurL, 1 PurQ and 2 PurS subunits.

The protein localises to the cytoplasm. The enzyme catalyses N(2)-formyl-N(1)-(5-phospho-beta-D-ribosyl)glycinamide + L-glutamine + ATP + H2O = 2-formamido-N(1)-(5-O-phospho-beta-D-ribosyl)acetamidine + L-glutamate + ADP + phosphate + H(+). It participates in purine metabolism; IMP biosynthesis via de novo pathway; 5-amino-1-(5-phospho-D-ribosyl)imidazole from N(2)-formyl-N(1)-(5-phospho-D-ribosyl)glycinamide: step 1/2. Its function is as follows. Part of the phosphoribosylformylglycinamidine synthase complex involved in the purines biosynthetic pathway. Catalyzes the ATP-dependent conversion of formylglycinamide ribonucleotide (FGAR) and glutamine to yield formylglycinamidine ribonucleotide (FGAM) and glutamate. The FGAM synthase complex is composed of three subunits. PurQ produces an ammonia molecule by converting glutamine to glutamate. PurL transfers the ammonia molecule to FGAR to form FGAM in an ATP-dependent manner. PurS interacts with PurQ and PurL and is thought to assist in the transfer of the ammonia molecule from PurQ to PurL. In Erythrobacter litoralis (strain HTCC2594), this protein is Phosphoribosylformylglycinamidine synthase subunit PurL.